Consider the following 876-residue polypeptide: Probable galactinol--sucrose galactosyltransferase 4 (876 aa).

Phosphoserine occurs at positions 7 and 9.

The protein belongs to the glycosyl hydrolases 36 family.

It carries out the reaction alpha-D-galactosyl-(1-&gt;3)-1D-myo-inositol + sucrose = raffinose + myo-inositol. Functionally, transglycosidase operating by a ping-pong reaction mechanism. Involved in the synthesis of raffinose, a major soluble carbohydrate in seeds, roots and tubers. The chain is Probable galactinol--sucrose galactosyltransferase 4 (RFS4) from Arabidopsis thaliana (Mouse-ear cress).